The primary structure comprises 316 residues: Very-long-chain 3-oxooacyl-coA reductase let-767 (316 aa).

Residues 52–80 (ITGA…VSRT) and aspartate 106 contribute to the NADP(+) site. Serine 189 serves as a coordination point for substrate. The active-site Proton acceptor is the tyrosine 202. Lysine 206 contributes to the NADP(+) binding site.

This sequence belongs to the short-chain dehydrogenases/reductases (SDR) family. 17-beta-HSD 3 subfamily.

The enzyme catalyses a very-long-chain (3R)-3-hydroxyacyl-CoA + NADP(+) = a very-long-chain 3-oxoacyl-CoA + NADPH + H(+). It functions in the pathway lipid metabolism; fatty acid biosynthesis. Required for branched chain fatty acid synthesis. Catalyzes the reduction of the 3-ketoacyl-CoA intermediate that is formed in each cycle of fatty acid elongation. Very long-chain fatty acids (VLCFAs) serve as precursors for ceramide and sphingolipids. May also be required for sterol hormone production. This is Very-long-chain 3-oxooacyl-coA reductase let-767 from Caenorhabditis briggsae.